Reading from the N-terminus, the 147-residue chain is Small ribosomal subunit protein uS5 (147 aa).

The S5 DRBM domain occupies 9-72 (FEEVIVDIGR…DDAFKNIVEV (64 aa)).

This sequence belongs to the universal ribosomal protein uS5 family. As to quaternary structure, part of the 30S ribosomal subunit. Contacts proteins S4 and S8.

With S4 and S12 plays an important role in translational accuracy. Functionally, located at the back of the 30S subunit body where it stabilizes the conformation of the head with respect to the body. The sequence is that of Small ribosomal subunit protein uS5 from Campylobacter jejuni subsp. jejuni serotype O:6 (strain 81116 / NCTC 11828).